The primary structure comprises 347 residues: NADH-ubiquinone oxidoreductase chain 2 (347 aa).

Transmembrane regions (helical) follow at residues 13–33 (IFAG…WVGL), 55–75 (AAIK…MAIL), 96–116 (LMIM…FWVP), 123–143 (PLMS…SIMY), 149–169 (LNVN…SWGG), 178–198 (ILAY…PYNP), 201–221 (TILN…LLNL), 247–267 (TLLS…WVII), 274–294 (NSLI…YFYL), and 326–346 (LPTL…MLMI).

Belongs to the complex I subunit 2 family. Core subunit of respiratory chain NADH dehydrogenase (Complex I) which is composed of 45 different subunits. Interacts with TMEM242.

It localises to the mitochondrion inner membrane. The enzyme catalyses a ubiquinone + NADH + 5 H(+)(in) = a ubiquinol + NAD(+) + 4 H(+)(out). In terms of biological role, core subunit of the mitochondrial membrane respiratory chain NADH dehydrogenase (Complex I) which catalyzes electron transfer from NADH through the respiratory chain, using ubiquinone as an electron acceptor. Essential for the catalytic activity and assembly of complex I. In Pan paniscus (Pygmy chimpanzee), this protein is NADH-ubiquinone oxidoreductase chain 2.